Consider the following 574-residue polypeptide: Streptolysin O (574 aa).

A signal peptide spans 1–36 (MKDMSNKKIFKKYSRVAGLLTAALIVGNLVTANADS). A compositionally biased stretch (low complexity) spans 37–52 (NKQNTANTETTTTNEQ). Disordered regions lie at residues 37–64 (NKQNTANTETTTTNEQPKPESSELTTEK) and 84–111 (KEMPLESAEKEEKKSEDNKKSEEDHTEE). The span at 53 to 64 (PKPESSELTTEK) shows a compositional bias: basic and acidic residues. The next 4 beta stranded transmembrane spans lie at 263–276 (KSQIEAALNVNSKI), 283–292 (IDFKSISKGE), 361–370 (SNDVEAAFSA), and 378–390 (KTNGKYSDILENS). Positions 532–542 (ECTGLAWEWWR) match the Conserved undecapeptide motif. Residues 564-565 (TL) carry the Cholesterol binding motif.

This sequence belongs to the cholesterol-dependent cytolysin family. In terms of assembly, homooligomeric pore complex of 35 to 50 subunits; when inserted in the host membrane.

The protein resides in the secreted. The protein localises to the host cell membrane. In terms of biological role, a cholesterol-dependent toxin that causes cytolysis by forming pores in cholesterol containing host membranes. After binding to target membranes, the protein undergoes a major conformation change, leading to its insertion in the host membrane and formation of an oligomeric pore complex. Cholesterol is required for binding to host membranes, membrane insertion and pore formation; cholesterol binding is mediated by a Thr-Leu pair in the C-terminus. Can be reversibly inactivated by oxidation. This Streptococcus canis protein is Streptolysin O (slo).